The primary structure comprises 585 residues: Potassium-transporting ATPase potassium-binding subunit (585 aa).

A run of 12 helical transmembrane segments spans residues 23-43 (GVII…ILSF), 85-105 (FINL…VIMF), 152-172 (FVIT…SMAF), 194-214 (IFDL…LAGI), 275-295 (VEFV…GIVF), 307-327 (VVMF…FAGV), 345-365 (AIGI…STGA), 367-387 (NAAL…GLLL), 397-417 (GVLN…LMVG), 444-464 (LLVV…SSFV), 502-522 (LDGV…LIIA), and 547-567 (VLLI…IIVL).

The protein belongs to the KdpA family. The system is composed of three essential subunits: KdpA, KdpB and KdpC.

Its subcellular location is the cell membrane. Part of the high-affinity ATP-driven potassium transport (or Kdp) system, which catalyzes the hydrolysis of ATP coupled with the electrogenic transport of potassium into the cytoplasm. This subunit binds the extracellular potassium ions and delivers the ions to the membrane domain of KdpB through an intramembrane tunnel. The sequence is that of Potassium-transporting ATPase potassium-binding subunit from Thermoplasma acidophilum (strain ATCC 25905 / DSM 1728 / JCM 9062 / NBRC 15155 / AMRC-C165).